The following is a 94-amino-acid chain: Non-specific lipid-transfer protein C4 (94 aa).

Positions 1 to 26 (MAASKGNAAAAACALVLVLLAVGAEA) are cleaved as a signal peptide. Intrachain disulfides connect C34-C72, C44-C59, C60-C85, and C70-C92. N91 carries an N-linked (GlcNAc...) asparagine glycan.

The protein belongs to the plant LTP family.

Its function is as follows. Lipid-transfer protein that may be regulated by the transcription factor UDT1 in developing anthers and play a role in tapetum development. In Oryza sativa subsp. japonica (Rice), this protein is Non-specific lipid-transfer protein C4.